A 371-amino-acid polypeptide reads, in one-letter code: Protein disulfide isomerase-like 2-2 (371 aa).

The first 27 residues, 1–27 (MAIPRISPRKTLPLFAALALALAWAFA), serve as a signal peptide directing secretion. Thioredoxin domains lie at 28-143 (APAF…TEGG) and 147-262 (KLAT…EKCG). Residues C64, C67, C183, and C186 each act as nucleophile in the active site. 2 disulfides stabilise this stretch: C64–C67 and C183–C186.

The protein belongs to the protein disulfide isomerase family.

The protein localises to the secreted. The catalysed reaction is Catalyzes the rearrangement of -S-S- bonds in proteins.. In terms of biological role, acts as a protein-folding catalyst that interacts with nascent polypeptides to catalyze the formation, isomerization, and reduction or oxidation of disulfide bonds. May play a role in storage protein biogenesis. In Oryza sativa subsp. japonica (Rice), this protein is Protein disulfide isomerase-like 2-2 (PDIL2-2).